Here is a 199-residue protein sequence, read N- to C-terminus: uncharacterized protein (199 aa).

Residues 7–27 form a helical membrane-spanning segment; sequence FWFWLILGIIALFIIVKAIVI.

Belongs to the band 7/mec-2 family.

Its subcellular location is the membrane. This is an uncharacterized protein from Methanocaldococcus jannaschii (strain ATCC 43067 / DSM 2661 / JAL-1 / JCM 10045 / NBRC 100440) (Methanococcus jannaschii).